The chain runs to 362 residues: dTDP-glucose 4,6-dehydratase (362 aa).

Residues 11 to 12 (FI), 32 to 35 (DKLT), 58 to 59 (DI), 80 to 84 (LAAES), and threonine 99 each bind NAD(+). Residue serine 84 participates in substrate binding. Residue threonine 133 participates in substrate binding. Aspartate 134 functions as the Proton donor in the catalytic mechanism. Residues glutamate 135 and tyrosine 167 each act as proton acceptor in the active site. 167–171 (YSASK) contacts NAD(+). Asparagine 196 lines the substrate pocket. Residue asparagine 197 participates in NAD(+) binding. Substrate-binding positions include 206 to 207 (KL), 222 to 224 (PVY), arginine 231, asparagine 266, and 300 to 304 (DRPGH).

This sequence belongs to the NAD(P)-dependent epimerase/dehydratase family. dTDP-glucose dehydratase subfamily. It depends on NAD(+) as a cofactor.

The catalysed reaction is dTDP-alpha-D-glucose = dTDP-4-dehydro-6-deoxy-alpha-D-glucose + H2O. The protein operates within bacterial outer membrane biogenesis; LPS O-antigen biosynthesis. In terms of biological role, catalyzes the dehydration of dTDP-D-glucose to form dTDP-4-dehydro-6-deoxy-D-glucose via a three-step process involving oxidation, dehydration and reduction. This reaction is a step in the biosynthesis of D-fucofuranose, a component of E.coli O52 O antigen. The chain is dTDP-glucose 4,6-dehydratase (rmlB) from Escherichia coli.